Here is a 349-residue protein sequence, read N- to C-terminus: MPMSRPDSAVSLLPDYSLRAHNTFGFDARARVAARIGSPGQFASLARDPRVAGLDRLVLGGGSNVVFTRDFDGLVLLDEIRGRALVREDDGAWYVEAGGGENWHAFVEWTLAEGMPGLENLALIPGTVGAAPIQNIGAYGLEMKEHFASLRAVELATGELVEFDAARCAFGYRDSFFKRDGRGRFAIVAVTFRLPKAWTPRIGYADVARELAARGIDARAARARDVFDAVVAIRRAKLPDPLALGNAGSFFKNPVIDAQAFAALRAREPDIVSYPQPDGRVKLAAGWLIDRCGWKGRALGAAAVHERQALVLVNLGGASGADVLALAHAIRRDVLGRFGVELEMEPVCL.

Positions 26–197 (FDARARVAAR…VAVTFRLPKA (172 aa)) constitute an FAD-binding PCMH-type domain. The active site involves Arg173. Ser249 (proton donor) is an active-site residue. The active site involves Glu345.

It belongs to the MurB family. FAD is required as a cofactor.

The protein resides in the cytoplasm. It catalyses the reaction UDP-N-acetyl-alpha-D-muramate + NADP(+) = UDP-N-acetyl-3-O-(1-carboxyvinyl)-alpha-D-glucosamine + NADPH + H(+). The protein operates within cell wall biogenesis; peptidoglycan biosynthesis. In terms of biological role, cell wall formation. This is UDP-N-acetylenolpyruvoylglucosamine reductase from Burkholderia pseudomallei (strain K96243).